Reading from the N-terminus, the 164-residue chain is HTH-type transcriptional regulator IscR (164 aa).

Positions 2 to 131 (RLTSKGRYAV…NNITLAELVN (130 aa)) constitute an HTH rrf2-type domain. Positions 28 to 51 (LADISERQGISLSYLEQLFSRLRK) form a DNA-binding region, H-T-H motif. Residues cysteine 92, cysteine 98, and cysteine 104 each contribute to the [2Fe-2S] cluster site. Residues 143–164 (NNDTRRTANGRPQETINVNLRA) are disordered. Positions 152 to 164 (GRPQETINVNLRA) are enriched in polar residues.

[2Fe-2S] cluster serves as cofactor.

Its function is as follows. Regulates the transcription of several operons and genes involved in the biogenesis of Fe-S clusters and Fe-S-containing proteins. The polypeptide is HTH-type transcriptional regulator IscR (Yersinia enterocolitica serotype O:8 / biotype 1B (strain NCTC 13174 / 8081)).